The chain runs to 215 residues: Thymidylate kinase (215 aa).

Residue 11–18 (GIDGAGKS) participates in ATP binding.

Belongs to the thymidylate kinase family.

It carries out the reaction dTMP + ATP = dTDP + ADP. Its function is as follows. Phosphorylation of dTMP to form dTDP in both de novo and salvage pathways of dTTP synthesis. In Nitrosomonas europaea (strain ATCC 19718 / CIP 103999 / KCTC 2705 / NBRC 14298), this protein is Thymidylate kinase.